We begin with the raw amino-acid sequence, 404 residues long: Probable glucan endo-1,6-beta-glucosidase B (404 aa).

The first 20 residues, 1 to 20 (MTTYQTLFLIPLAISTLVTA), serve as a signal peptide directing secretion. N-linked (GlcNAc...) asparagine glycans are attached at residues N33 and N130. E222 serves as the catalytic Proton donor. N-linked (GlcNAc...) asparagine glycosylation is found at N253 and N299. E324 functions as the Nucleophile in the catalytic mechanism.

It belongs to the glycosyl hydrolase 5 (cellulase A) family.

The protein resides in the secreted. The catalysed reaction is Random hydrolysis of (1-&gt;6)-linkages in (1-&gt;6)-beta-D-glucans.. Functionally, beta-glucanases participate in the metabolism of beta-glucan, the main structural component of the cell wall. Acts on lutean, pustulan and 1,6-oligo-beta-D-glucosides. This is Probable glucan endo-1,6-beta-glucosidase B (exgB) from Aspergillus terreus (strain NIH 2624 / FGSC A1156).